Consider the following 1812-residue polypeptide: Sperm flagellar protein 2 (1812 aa).

In terms of domain architecture, Calponin-homology (CH) spans 1 to 105 (MSEILCHWLN…LLYQLYIALQ (105 aa)). Coiled coils occupy residues 178 to 260 (LENF…KDLQ) and 374 to 403 (EERR…EEQA). Positions 618–630 (EEKASPVRQESGD) are enriched in basic and acidic residues. The segment at 618 to 658 (EEKASPVRQESGDRSQNLHNVLSAEGTPETEDETRLSTKKT) is disordered. Coiled coils occupy residues 724–750 (LNQA…KKSQ), 803–827 (ENIN…DQIQ), and 868–897 (KEMF…KEEF). Positions 879–897 (ENKAKKKSEEKEAEKKEEF) are enriched in basic and acidic residues. Disordered stretches follow at residues 879 to 1002 (ENKA…KPGS), 1272 to 1322 (EEKE…APVI), and 1793 to 1812 (EHIQ…EEKK). The segment covering 902–913 (ATPPTPPAPPPS) has biased composition (pro residues). 3 stretches are compositionally biased toward basic and acidic residues: residues 914–929 (EPEK…ERSK), 943–961 (HGNR…ETSP), and 1272–1285 (EEKE…KEKP). The span at 1292–1310 (KKVKKEPPKKKREDKKGKG) shows a compositional bias: basic residues. The interaction with IFT20 stretch occupies residues 1317 to 1669 (ESAPVITVEE…AEKTSSFIDM (353 aa)).

As to quaternary structure, interacts (via C-terminus) with IFT20. Interacts with DYNC1I2. As to expression, predominantly expressed in ciliated tissues. Mainly expressed in testis, followed by trachea. Also expressed at lower level in lung, kidney and liver.

It localises to the cell projection. The protein resides in the cilium. Its subcellular location is the flagellum. It is found in the cytoplasm. The protein localises to the golgi apparatus. In terms of biological role, required for correct axoneme development in spermatozoa. Important for normal development of the manchette and sperm head morphology. Essential for male fertility. Plays a role in localization of the intraflagellar transport protein IFT20 to the manchette, suggesting function as an adapter for dynein-mediated protein transport during spermatogenesis. Also plays a role in bone growth where it seems to be required for normal osteoblast differentiation. In Sus scrofa (Pig), this protein is Sperm flagellar protein 2 (SPEF2).